A 465-amino-acid chain; its full sequence is Lactaldehyde dehydrogenase (465 aa).

Residue 220 to 225 participates in NAD(+) binding; the sequence is GSVEVG. Residues E240 and C274 contribute to the active site.

Belongs to the aldehyde dehydrogenase family. In terms of assembly, homotetramer.

It carries out the reaction (S)-lactaldehyde + NAD(+) + H2O = (S)-lactate + NADH + 2 H(+). Its pathway is cofactor biosynthesis; coenzyme F420 biosynthesis. Its function is as follows. Involved in F420 biosynthesis through the oxidation of lactaldehyde to lactate. The polypeptide is Lactaldehyde dehydrogenase (Methanococcus maripaludis (strain DSM 14266 / JCM 13030 / NBRC 101832 / S2 / LL)).